Reading from the N-terminus, the 258-residue chain is Methylthioribulose-1-phosphate dehydratase (258 aa).

The segment at 1 to 21 (MCSPTTENNNNNNDHLVQSSD) is disordered. Position 105 (Cys-105) interacts with substrate. Residues His-123 and His-125 each contribute to the Zn(2+) site. Glu-153 acts as the Proton donor/acceptor in catalysis. Residue His-210 participates in Zn(2+) binding.

The protein belongs to the aldolase class II family. MtnB subfamily. Requires Zn(2+) as cofactor.

The protein resides in the cytoplasm. The catalysed reaction is 5-(methylsulfanyl)-D-ribulose 1-phosphate = 5-methylsulfanyl-2,3-dioxopentyl phosphate + H2O. It participates in amino-acid biosynthesis; L-methionine biosynthesis via salvage pathway; L-methionine from S-methyl-5-thio-alpha-D-ribose 1-phosphate: step 2/6. Functionally, catalyzes the dehydration of methylthioribulose-1-phosphate (MTRu-1-P) into 2,3-diketo-5-methylthiopentyl-1-phosphate (DK-MTP-1-P). This Neurospora crassa (strain ATCC 24698 / 74-OR23-1A / CBS 708.71 / DSM 1257 / FGSC 987) protein is Methylthioribulose-1-phosphate dehydratase.